The chain runs to 343 residues: S-adenosylmethionine:tRNA ribosyltransferase-isomerase (343 aa).

This sequence belongs to the QueA family. In terms of assembly, monomer.

The protein localises to the cytoplasm. The enzyme catalyses 7-aminomethyl-7-carbaguanosine(34) in tRNA + S-adenosyl-L-methionine = epoxyqueuosine(34) in tRNA + adenine + L-methionine + 2 H(+). It participates in tRNA modification; tRNA-queuosine biosynthesis. In terms of biological role, transfers and isomerizes the ribose moiety from AdoMet to the 7-aminomethyl group of 7-deazaguanine (preQ1-tRNA) to give epoxyqueuosine (oQ-tRNA). In Dehalococcoides mccartyi (strain ATCC BAA-2100 / JCM 16839 / KCTC 5957 / BAV1), this protein is S-adenosylmethionine:tRNA ribosyltransferase-isomerase.